The following is a 250-amino-acid chain: 5-oxoprolinase subunit A (250 aa).

Belongs to the LamB/PxpA family. Forms a complex composed of PxpA, PxpB and PxpC.

The catalysed reaction is 5-oxo-L-proline + ATP + 2 H2O = L-glutamate + ADP + phosphate + H(+). Catalyzes the cleavage of 5-oxoproline to form L-glutamate coupled to the hydrolysis of ATP to ADP and inorganic phosphate. The sequence is that of 5-oxoprolinase subunit A from Streptomyces avermitilis (strain ATCC 31267 / DSM 46492 / JCM 5070 / NBRC 14893 / NCIMB 12804 / NRRL 8165 / MA-4680).